Consider the following 834-residue polypeptide: Glycerol-3-phosphate acyltransferase (834 aa).

Positions 309–314 (CHRSHI) match the HXXXXD motif motif.

The protein belongs to the GPAT/DAPAT family.

The protein resides in the cell inner membrane. It catalyses the reaction sn-glycerol 3-phosphate + an acyl-CoA = a 1-acyl-sn-glycero-3-phosphate + CoA. It functions in the pathway phospholipid metabolism; CDP-diacylglycerol biosynthesis; CDP-diacylglycerol from sn-glycerol 3-phosphate: step 1/3. The polypeptide is Glycerol-3-phosphate acyltransferase (Pseudomonas paraeruginosa (strain DSM 24068 / PA7) (Pseudomonas aeruginosa (strain PA7))).